The sequence spans 527 residues: uncharacterized protein (527 aa).

This is an uncharacterized protein from Schizosaccharomyces pombe (strain 972 / ATCC 24843) (Fission yeast).